Consider the following 263-residue polypeptide: Adaptin ear-binding coat-associated protein 2 (263 aa).

Disordered regions lie at residues 167-191 and 209-263; these read KKEG…LPPP and GGSL…WVQF. The residue at position 181 (serine 181) is a Phosphoserine. 2 consecutive short sequence motifs (WXXF motif) follow at residues 218–221 and 238–241; these read GSGG and DIWG. A compositionally biased stretch (low complexity) spans 246–263; sequence STGSPSSQSQPGTGWVQF.

Belongs to the NECAP family. Interacts with AP1G1 and AP2A1 components of the adapter protein complexes AP-1 and AP-2. Interacts with the GAE domain proteins GGA1, GGA2 and GGA3. As to expression, expressed in brain, heart, kidney, liver and lung (at protein level).

Its subcellular location is the cytoplasmic vesicle. The protein localises to the clathrin-coated vesicle membrane. It is found in the cell membrane. In terms of biological role, involved in endocytosis. The protein is Adaptin ear-binding coat-associated protein 2 (Necap2) of Rattus norvegicus (Rat).